The sequence spans 124 residues: UPF0235 protein (124 aa).

Positions 1–22 (MTKKGSSNSSKQQQQQQQIIIN) are disordered.

This sequence belongs to the UPF0235 family.

The polypeptide is UPF0235 protein (Dictyostelium discoideum (Social amoeba)).